Reading from the N-terminus, the 243-residue chain is DNA repair protein RecO (243 aa).

It belongs to the RecO family.

Its function is as follows. Involved in DNA repair and RecF pathway recombination. This Azoarcus sp. (strain BH72) protein is DNA repair protein RecO.